The primary structure comprises 295 residues: GTPase Era (295 aa).

Residues 7–176 (KTVSVCIIGR…ITSKAKIAPW (170 aa)) form the Era-type G domain. The G1 stretch occupies residues 15–22 (GRPNSGKS). A GTP-binding site is contributed by 15 to 22 (GRPNSGKS). Residues 41–45 (QTTRS) form a G2 region. The segment at 62–65 (DTPG) is G3. Residues 62 to 66 (DTPGI) and 124 to 127 (NKID) contribute to the GTP site. The tract at residues 124–127 (NKID) is G4. Residues 152–154 (ISA) form a G5 region. One can recognise a KH type-2 domain in the interval 204-281 (LQQELPYKLT…HLFLFVKVQE (78 aa)).

It belongs to the TRAFAC class TrmE-Era-EngA-EngB-Septin-like GTPase superfamily. Era GTPase family. As to quaternary structure, monomer.

The protein localises to the cytoplasm. It is found in the cell inner membrane. An essential GTPase that binds both GDP and GTP, with rapid nucleotide exchange. Plays a role in 16S rRNA processing and 30S ribosomal subunit biogenesis and possibly also in cell cycle regulation and energy metabolism. This is GTPase Era from Rickettsia bellii (strain RML369-C).